A 291-amino-acid polypeptide reads, in one-letter code: MASNVLNRYLFEDLSVRGELVQLDEAYQRIISSKDYPAALQKLLGELLVSTTLLTATLKFEGSITIQLQGDGPVSLAVINGDNEQKIRGVARWEGHIADDATLHDMMGKGYMVITIEPKKGERYQGIVGLEGDNLEQVLEGYFERSEQLKTRIWIRTGEHEGKAHAAGMLIQVMPDGTGSENDFEHLEQLTNTVKNEELFTLPANELLYRLYNQEQVRLFEPQNVEFRCGCSRERSGAAIVTVDKNEIYDILASDGSVSLHCDYCGTTYSFDESDVNKLYEEAASEPKTLH.

Cystine bridges form between Cys229/Cys231 and Cys262/Cys265.

Belongs to the HSP33 family. Post-translationally, under oxidizing conditions two disulfide bonds are formed involving the reactive cysteines. Under reducing conditions zinc is bound to the reactive cysteines and the protein is inactive.

The protein resides in the cytoplasm. Redox regulated molecular chaperone. Protects both thermally unfolding and oxidatively damaged proteins from irreversible aggregation. Plays an important role in the bacterial defense system toward oxidative stress. The sequence is that of 33 kDa chaperonin from Vibrio vulnificus (strain YJ016).